A 389-amino-acid chain; its full sequence is 8-amino-7-oxononanoate synthase (389 aa).

R18 is a substrate binding site. 104–105 (GY) provides a ligand contact to pyridoxal 5'-phosphate. H129 contacts substrate. Pyridoxal 5'-phosphate contacts are provided by S176, H204, and T232. K235 is modified (N6-(pyridoxal phosphate)lysine). Residue T351 participates in substrate binding.

The protein belongs to the class-II pyridoxal-phosphate-dependent aminotransferase family. BioF subfamily. As to quaternary structure, homodimer. Pyridoxal 5'-phosphate is required as a cofactor.

It carries out the reaction 6-carboxyhexanoyl-[ACP] + L-alanine + H(+) = (8S)-8-amino-7-oxononanoate + holo-[ACP] + CO2. It functions in the pathway cofactor biosynthesis; biotin biosynthesis. Functionally, catalyzes the decarboxylative condensation of pimeloyl-[acyl-carrier protein] and L-alanine to produce 8-amino-7-oxononanoate (AON), [acyl-carrier protein], and carbon dioxide. The chain is 8-amino-7-oxononanoate synthase from Citrifermentans bemidjiense (strain ATCC BAA-1014 / DSM 16622 / JCM 12645 / Bem) (Geobacter bemidjiensis).